We begin with the raw amino-acid sequence, 125 residues long: Protein ApaG (125 aa).

The region spanning 1–125 (MIDAPRIIVQ…FRLAIPSLIN (125 aa)) is the ApaG domain.

The sequence is that of Protein ApaG from Edwardsiella ictaluri (strain 93-146).